Here is an 81-residue protein sequence, read N- to C-terminus: Elsinochrome C biosynthesis cluster protein SNOG_08613 (81 aa).

Its function is as follows. Part of the gene cluster that mediates the biosynthesis of elsinochrome C, a perelyenequinone phytotoxin structurally similar to cercosporin. The first step of elsinochrome C biosynthesis is performed by the polyketide synthase elcA which catalyzes the formation of nor-toralactone. The starter unit acyltransferase (SAT) domain of elcA initiates polyketide extension by the selective utilization of acetyl-CoA, which is elongated to the heptaketide in the beta-ketoacyl synthase (KS) domain by successive condensations with six malonyl units introduced by the malonyl acyltransferase (MAT) domain. The product template (PT) domain catalyzes C4-C9 and C2-C11 aldol cyclizations and dehydrations to a trihydroxynaphthalene, which is thought to be delivered to the thioesterase (TE) domain for product release. The bifunctional enzyme elcB then methylates nor-toralactone to toralactone before conducting an unusual oxidative aromatic ring opening. The next step in perylenequinone biosynthesis is an O-methylation at the nascent OH-6 of the elcB product performed by the O-methyltransferase elcD. The oxidative coupling of the two monomeric naphthol units in perylenequinone biosynthesis is catalyzed by the FAD-dependent monooxygenase elcE and the multicopper oxidase elcG. ElcG might catalyze the first intermolecular coupling in a regio- and stereo-selective manner via a phenol radical coupling mechanism and the elcE could forge the second C-C bond intramolecularly via a hydride transfer mechanism. The fasciclin domain-containing protein elcF might also play a role duting this step. The last piece of the puzzle in the biosynthesis of elsinochrome C is the additional annulation by enolate coupling to afford the dihydrobenzo(ghi)perylenequinone system, catalyzed by the FAD-dependent monooxygenase elcH. In Phaeosphaeria nodorum (strain SN15 / ATCC MYA-4574 / FGSC 10173) (Glume blotch fungus), this protein is Elsinochrome C biosynthesis cluster protein SNOG_08613.